We begin with the raw amino-acid sequence, 263 residues long: uncharacterized protein (263 aa).

Residues 107–246 (ILGVLNGDGS…CCSFLEKLGI (140 aa)) form the DOD-type homing endonuclease domain.

This is an uncharacterized protein from Methanocaldococcus jannaschii (strain ATCC 43067 / DSM 2661 / JAL-1 / JCM 10045 / NBRC 100440) (Methanococcus jannaschii).